The primary structure comprises 493 residues: Dipeptide permease D (493 aa).

13 helical membrane-spanning segments follow: residues 14 to 34, 49 to 69, 91 to 111, 138 to 158, 167 to 187, 212 to 232, 235 to 255, 267 to 287, 312 to 332, 344 to 364, 379 to 399, 413 to 433, and 458 to 478; these read VVALQIWEYFSFYGMRALLIL, ALFSAYCSLVYVTPILGGYLA, LVLGASEIAPTFLYLSLAIIV, GGFSLLYAAGNVGSIVAPIAC, WAMGFALAAIGMVAGLIIFLC, NWGWLLVLLTIAPLAIAVLFW, WAVYALIVATAIGLAVLGKIY, LGLIVTLTFFSMLFWAFAQQG, MFQSVNAFAVMLCGVVLAWLI, IWGKFALGLGLMSAGFSILTL, LMIAGLAVMGFAELFIDPVAM, VLTGIYMLLSGAIANYLAGVI, and VFSEITWGALACVGLVLLIWL.

Belongs to the major facilitator superfamily. Proton-dependent oligopeptide transporter (POT/PTR) (TC 2.A.17) family. DtpD subfamily.

It localises to the cell inner membrane. Its function is as follows. Probable proton-dependent permease that transports dipeptides. In Citrobacter rodentium (strain ICC168) (Citrobacter freundii biotype 4280), this protein is Dipeptide permease D.